The primary structure comprises 335 residues: Glycerol-3-phosphate dehydrogenase [NAD(P)+] (335 aa).

Residues W15, R36, and K109 each coordinate NADPH. Sn-glycerol 3-phosphate contacts are provided by K109, G137, and S139. A141 is an NADPH binding site. Sn-glycerol 3-phosphate-binding residues include K192, D245, S255, R256, and N257. K192 functions as the Proton acceptor in the catalytic mechanism. R256 contributes to the NADPH binding site. Residues L279 and E281 each coordinate NADPH.

Belongs to the NAD-dependent glycerol-3-phosphate dehydrogenase family.

The protein localises to the cytoplasm. The catalysed reaction is sn-glycerol 3-phosphate + NAD(+) = dihydroxyacetone phosphate + NADH + H(+). It carries out the reaction sn-glycerol 3-phosphate + NADP(+) = dihydroxyacetone phosphate + NADPH + H(+). Its pathway is membrane lipid metabolism; glycerophospholipid metabolism. Catalyzes the reduction of the glycolytic intermediate dihydroxyacetone phosphate (DHAP) to sn-glycerol 3-phosphate (G3P), the key precursor for phospholipid synthesis. This is Glycerol-3-phosphate dehydrogenase [NAD(P)+] from Beijerinckia indica subsp. indica (strain ATCC 9039 / DSM 1715 / NCIMB 8712).